Consider the following 219-residue polypeptide: Uracil-DNA glycosylase (219 aa).

The Proton acceptor role is filled by Asp61.

Belongs to the uracil-DNA glycosylase (UDG) superfamily. UNG family.

The protein resides in the cytoplasm. It catalyses the reaction Hydrolyzes single-stranded DNA or mismatched double-stranded DNA and polynucleotides, releasing free uracil.. In terms of biological role, excises uracil residues from the DNA which can arise as a result of misincorporation of dUMP residues by DNA polymerase or due to deamination of cytosine. This chain is Uracil-DNA glycosylase, found in Neisseria meningitidis serogroup B (strain ATCC BAA-335 / MC58).